A 158-amino-acid chain; its full sequence is UPF0098 protein YbhB (158 aa).

The protein belongs to the UPF0098 family. As to quaternary structure, homodimer.

The protein localises to the cytoplasm. This is UPF0098 protein YbhB (ybhB) from Escherichia coli (strain K12).